The sequence spans 659 residues: Putative RING finger protein R311 (659 aa).

Residues cysteine 502–methionine 540 form an RING-type zinc finger.

In Acanthamoeba polyphaga (Amoeba), this protein is Putative RING finger protein R311.